The sequence spans 1915 residues: Protein TIC 214 (1915 aa).

Transmembrane regions (helical) follow at residues 18–38, 64–84, 90–110, 126–146, 174–194, and 230–250; these read IINS…FSIG, FITG…HLAL, ITVL…HKYF, LNIQ…HFIL, VGWL…LIWI, and IFSI…PSTL. Disordered stretches follow at residues 260-319 and 1566-1631; these read KMKQ…EIRV and NKNI…GSVL. Over residues 267-277 the composition is skewed to acidic residues; sequence SEEETDVEIET. Residues 279 to 288 are compositionally biased toward basic and acidic residues; sequence SETKETKEEQ. Over residues 304-315 the composition is skewed to acidic residues; it reads EKEDPDKIDETE. Residues 1587 to 1601 are compositionally biased toward basic and acidic residues; sequence KSLELENRNQEEKES. Residues 1602-1631 are compositionally biased toward polar residues; sequence SSQGDLGSNAQNQGNLGPNAQNQGNLGSVL.

The protein belongs to the TIC214 family. As to quaternary structure, part of the Tic complex.

It localises to the plastid. It is found in the chloroplast inner membrane. In terms of biological role, involved in protein precursor import into chloroplasts. May be part of an intermediate translocation complex acting as a protein-conducting channel at the inner envelope. This is Protein TIC 214 from Platanus occidentalis (Sycamore).